The following is a 250-amino-acid chain: MVRIAFGSIGDSFSVGSLKAYVAEFIATLLFVFAGVGSAIAYNKLTADAALDPAGLVAVAVAHAFALFVGVSIAANISGGHLNPAVTLGLAVGGNITILTGFFYWIAQLLGSTVACLLLKYVTNGLAVPTHGVAAGLNGLQGVVMEIIITFALVYTVYATAADPKKGSLGTIAPIAIGFIVGANILAAGPFSGGSMNPARSFGPAVVAGDFSQNWIYWAGPLIGGGLAGFIYGDVFIGCHTPLPTSEDYA.

2 consecutive transmembrane segments (helical) span residues 20 to 42 (AYVA…AIAY) and 55 to 77 (GLVA…AANI). Positions 83–85 (NPA) match the NPA 1 motif. Helical transmembrane passes span 97-119 (TILT…CLLL), 140-162 (LQGV…ATAA), and 172-194 (IAPI…FSGG). The short motif at 197–199 (NPA) is the NPA 2 element. The chain crosses the membrane as a helical span at residues 215-237 (WIYWAGPLIGGGLAGFIYGDVFI).

It belongs to the MIP/aquaporin (TC 1.A.8) family. TIP (TC 1.A.8.10) subfamily. Roots.

It is found in the vacuole membrane. Functionally, channel protein in tonoplast. These proteins may allow the diffusion of amino acids and/or peptides from the vacuolar compartment to the cytoplasm. The protein is Probable aquaporin TIP-type RB7-5A of Nicotiana tabacum (Common tobacco).